We begin with the raw amino-acid sequence, 305 residues long: Acetaldehyde dehydrogenase (305 aa).

Serine 13 to isoleucine 16 provides a ligand contact to NAD(+). Cysteine 128 acts as the Acyl-thioester intermediate in catalysis. NAD(+) contacts are provided by residues serine 159 to asparagine 167 and asparagine 278.

This sequence belongs to the acetaldehyde dehydrogenase family.

It catalyses the reaction acetaldehyde + NAD(+) + CoA = acetyl-CoA + NADH + H(+). This chain is Acetaldehyde dehydrogenase, found in Roseiflexus sp. (strain RS-1).